The sequence spans 1004 residues: Translation initiation factor IF-2 (1004 aa).

Residues 36-393 (SSTIEPPVVK…RQKRNEYESM (358 aa)) form a disordered region. Composition is skewed to low complexity over residues 62 to 157 (AAKP…AKPA) and 173 to 183 (AAKPGAEAPRP). Pro residues-rich tracts occupy residues 184–196 (GGMP…PAPK) and 219–236 (PRPG…PGGG). Gly residues-rich tracts occupy residues 237–249 (PRPQ…GGQR) and 261–277 (GNRG…GPRP). Low complexity predominate over residues 279-303 (GGPRPQGGSRPQGGSAQGAQGAPSQ). Residues 330 to 373 (GKGGRGGQAGGGAGGGFNRGGGTGGGAGRGGRRGGTAGAFGRPG) are compositionally biased toward gly residues. The span at 377-386 (RRGRKSKRQK) shows a compositional bias: basic residues. The 173-residue stretch at 499-671 (KRPPVVTVMG…VCLTADAELD (173 aa)) folds into the tr-type G domain. The G1 stretch occupies residues 508–515 (GHVDHGKT). 508–515 (GHVDHGKT) contacts GTP. Residues 533 to 537 (GITQG) are G2. The segment at 558–561 (DTPG) is G3. GTP-binding positions include 558 to 562 (DTPGH) and 612 to 615 (NKID). Positions 612–615 (NKID) are G4. A G5 region spans residues 648 to 650 (SAK).

This sequence belongs to the TRAFAC class translation factor GTPase superfamily. Classic translation factor GTPase family. IF-2 subfamily.

It is found in the cytoplasm. Its function is as follows. One of the essential components for the initiation of protein synthesis. Protects formylmethionyl-tRNA from spontaneous hydrolysis and promotes its binding to the 30S ribosomal subunits. Also involved in the hydrolysis of GTP during the formation of the 70S ribosomal complex. The protein is Translation initiation factor IF-2 of Corynebacterium glutamicum (strain ATCC 13032 / DSM 20300 / JCM 1318 / BCRC 11384 / CCUG 27702 / LMG 3730 / NBRC 12168 / NCIMB 10025 / NRRL B-2784 / 534).